Consider the following 97-residue polypeptide: Plasmid stability protein StbC (97 aa).

Its function is as follows. Involved in plasmid stability. The polypeptide is Plasmid stability protein StbC (stbC) (Pseudomonas syringae pv. tomato (strain ATCC BAA-871 / DC3000)).